Reading from the N-terminus, the 114-residue chain is PDZK1-interacting protein 1 (114 aa).

Over methionine 1–glutamine 28 the chain is Extracellular. Residues proline 29–asparagine 51 form a helical membrane-spanning segment. Residues histidine 52–methionine 114 are Cytoplasmic-facing. A Phosphoserine modification is found at serine 85. Residues histidine 95–methionine 114 form a disordered region. The segment covering glutamate 105–methionine 114 has biased composition (basic and acidic residues).

The protein belongs to the PDZK1-interacting protein 1/SMIM24 family. Forms a heterodimer (via N-terminal transmembrane helix) with SLC5A2/SGLT2 (via TM13); this interaction enhances SLC5A2 transporter activity. Interacts with PDZK1.

It is found in the apical cell membrane. In terms of biological role, auxiliary protein of electrogenic Na(+)-coupled sugar symporter SLC5A2/SGLT2 and SLC5A1/SGLT1. Essential for the transporter activity of SLC5A2/SGLT2 but not SLC5A1/SGLT1. In Pongo abelii (Sumatran orangutan), this protein is PDZK1-interacting protein 1.